The chain runs to 207 residues: dTTP/UTP pyrophosphatase (207 aa).

The active-site Proton acceptor is the Asp-79.

This sequence belongs to the Maf family. YhdE subfamily. It depends on a divalent metal cation as a cofactor.

It localises to the cytoplasm. It carries out the reaction dTTP + H2O = dTMP + diphosphate + H(+). The catalysed reaction is UTP + H2O = UMP + diphosphate + H(+). In terms of biological role, nucleoside triphosphate pyrophosphatase that hydrolyzes dTTP and UTP. May have a dual role in cell division arrest and in preventing the incorporation of modified nucleotides into cellular nucleic acids. The sequence is that of dTTP/UTP pyrophosphatase from Rhodopseudomonas palustris (strain BisB5).